Consider the following 718-residue polypeptide: Heme peroxidase 2 (718 aa).

The signal sequence occupies residues 1-19 (MNLKPTILLFTILFLKCAT). The propeptide occupies 20-146 (FEVNEETERI…QANRRCSSPP (127 aa)). Disordered regions lie at residues 41–64 (RASENSESEQTSQHIIVSQQANSD) and 108–144 (LLQSSETTTTTEHPDPTRSKRSAIFRSKRQANRRCSS). Residues 45–64 (NSESEQTSQHIIVSQQANSD) are compositionally biased toward polar residues. Low complexity predominate over residues 109-118 (LQSSETTTTT). Over residues 126 to 139 (SKRSAIFRSKRQAN) the composition is skewed to basic residues. Residues C149 and C164 are joined by a disulfide bond. H241 (proton acceptor) is an active-site residue. Ca(2+) is bound at residue D242. Residues C262 and C272 are joined by a disulfide bond. Ca(2+) is bound by residues S311, F313, D315, and S317. N354 is a glycosylation site (N-linked (GlcNAc...) asparagine). C358 and C366 form a disulfide bridge. H477 lines the heme b pocket. 4 N-linked (GlcNAc...) asparagine glycosylation sites follow: N551, N592, N662, and N673. A disulfide bridge links C682 with C705.

Belongs to the peroxidase family. Requires heme b as cofactor. Expressed in the hypodermis and gland cells of the pharynx. Specifically, there is low and transient expression from the distal bulb of the pharynx to the anterior of the buccal cavity. Whole body expression levels increase upon entry into the dauer phase.

The protein localises to the secreted. It catalyses the reaction 2 a phenolic donor + H2O2 = 2 a phenolic radical donor + 2 H2O. Functionally, peroxidase which is involved in maintaining the cuticle integrity in the hypodermis and pharynx. It thus plays a role in conferring resistance against Gram-positive bacteria such as E.faecalis, S.aureus and C.diphtheriae, and yeast such as C.albicans. This Caenorhabditis elegans protein is Heme peroxidase 2.